The following is a 749-amino-acid chain: Protein kinase domain-containing protein ppk32 (749 aa).

The 297-residue stretch at 21–317 folds into the Protein kinase domain; it reads IQKENSVQVG…MFELERSPYF (297 aa). Disordered stretches follow at residues 598–677 and 706–749; these read KKLQ…VTAK and PLIP…KSLL. Residues 602–651 are compositionally biased toward polar residues; that stretch reads SKPSSVVPNRITTDPFSSQTKEATSKPSSISPNKATTNIFTSQASLSSQG. Position 632 is a phosphoserine (Ser632). 2 stretches are compositionally biased toward low complexity: residues 657–670 and 721–735; these read SSAS…QRAS and NRRV…NTVT.

The protein resides in the cytoplasm. The chain is Protein kinase domain-containing protein ppk32 (ppk32) from Schizosaccharomyces pombe (strain 972 / ATCC 24843) (Fission yeast).